We begin with the raw amino-acid sequence, 441 residues long: Importin subunit alpha-8 (441 aa).

8 ARM repeats span residues 39–79, 80–118, 121–158, 160–199, 202–241, 244–284, 287–326, and 330–370; these read QRDI…NIAV, DNPGVVVNNNAVPVLIQLIASPKDYVREQAIWTLSNVAG, IHYRDFVLNSGVLMPLLRLLYKDTTLRIATWALRNLCR, KPHPAFDQVKPALPALEILLHSHDEDVLKNACMALCHLSE, EDGIQSVIEAGFVPKLVQILQLPSPVVLVPALLTIGAMTA, HQQT…NITA, KEQIQSVIDANLIPILVNLAQDTDFYMKKEAVWAISNMAL, and HDQI…NMLK.

This sequence belongs to the importin alpha family. In terms of assembly, forms a complex with importin subunit beta-1.

It localises to the nucleus envelope. Functionally, binds to conventional NLS motifs and mediates nuclear protein import across the nuclear envelope. The sequence is that of Importin subunit alpha-8 from Arabidopsis thaliana (Mouse-ear cress).